The primary structure comprises 206 residues: Accelerated cell death 11 (206 aa).

5 residues coordinate an N-acylsphingoid base 1-phosphate: aspartate 60, lysine 64, arginine 99, arginine 103, and histidine 143.

Belongs to the GLTP family. Interacts with BPA1, PRA1F2 and PRA1F3.

Its subcellular location is the cytoplasm. Functionally, exhibits selective intermembrane transfer of ceramide-1-phosphate (C1P) and phytoceramide-1-phosphate. Does not transport ceramide (Cer) or GalCer, suggesting a requirement for phosphate in the headgroup for functionality. Transports in vitro sphingosine, but not glycosphingolipids. Also has some in vitro activity with sphingomyelin, a lipid not detected in plant tissues. The transport function may be not directly involved in regulating cell death. Rather, perturbations in the function of ACD11 or related components could be monitored by R-proteins, which then mediate defense and programmed cell death (PCD), as proposed in the guard hypothesis. C1P transfer is stimulated by phosphatidylserine in C1P source vesicles. Regulates autophagy, inflammasome mediated IL1B and IL18 processing, and pyroptosis, but not apoptosis. The chain is Accelerated cell death 11 from Arabidopsis thaliana (Mouse-ear cress).